The following is a 329-amino-acid chain: Holliday junction branch migration complex subunit RuvB (329 aa).

Residues 1–180 (MKNILQSTEC…FGIPIHLEFY (180 aa)) form a large ATPase domain (RuvB-L) region. Residues Arg20, Gly61, Lys64, Thr65, Thr66, 127 to 129 (EDF), Arg170, Tyr180, and Arg217 each bind ATP. Mg(2+) is bound at residue Thr65. The interval 181–252 (STEELTKVIQ…FADKALLRLG (72 aa)) is small ATPAse domain (RuvB-S). Residues 255–329 (KLGLDRQDIQ…ISHLREQEYI (75 aa)) are head domain (RuvB-H). The DNA site is built by Arg308 and Arg313.

The protein belongs to the RuvB family. Homohexamer. Forms an RuvA(8)-RuvB(12)-Holliday junction (HJ) complex. HJ DNA is sandwiched between 2 RuvA tetramers; dsDNA enters through RuvA and exits via RuvB. An RuvB hexamer assembles on each DNA strand where it exits the tetramer. Each RuvB hexamer is contacted by two RuvA subunits (via domain III) on 2 adjacent RuvB subunits; this complex drives branch migration. In the full resolvosome a probable DNA-RuvA(4)-RuvB(12)-RuvC(2) complex forms which resolves the HJ.

It is found in the cytoplasm. The enzyme catalyses ATP + H2O = ADP + phosphate + H(+). The RuvA-RuvB-RuvC complex processes Holliday junction (HJ) DNA during genetic recombination and DNA repair, while the RuvA-RuvB complex plays an important role in the rescue of blocked DNA replication forks via replication fork reversal (RFR). RuvA specifically binds to HJ cruciform DNA, conferring on it an open structure. The RuvB hexamer acts as an ATP-dependent pump, pulling dsDNA into and through the RuvAB complex. RuvB forms 2 homohexamers on either side of HJ DNA bound by 1 or 2 RuvA tetramers; 4 subunits per hexamer contact DNA at a time. Coordinated motions by a converter formed by DNA-disengaged RuvB subunits stimulates ATP hydrolysis and nucleotide exchange. Immobilization of the converter enables RuvB to convert the ATP-contained energy into a lever motion, pulling 2 nucleotides of DNA out of the RuvA tetramer per ATP hydrolyzed, thus driving DNA branch migration. The RuvB motors rotate together with the DNA substrate, which together with the progressing nucleotide cycle form the mechanistic basis for DNA recombination by continuous HJ branch migration. Branch migration allows RuvC to scan DNA until it finds its consensus sequence, where it cleaves and resolves cruciform DNA. This Ehrlichia chaffeensis (strain ATCC CRL-10679 / Arkansas) protein is Holliday junction branch migration complex subunit RuvB.